The chain runs to 126 residues: Large ribosomal subunit protein bL12 (126 aa).

It belongs to the bacterial ribosomal protein bL12 family. In terms of assembly, homodimer. Part of the ribosomal stalk of the 50S ribosomal subunit. Forms a multimeric L10(L12)X complex, where L10 forms an elongated spine to which 2 to 4 L12 dimers bind in a sequential fashion. Binds GTP-bound translation factors.

Its function is as follows. Forms part of the ribosomal stalk which helps the ribosome interact with GTP-bound translation factors. Is thus essential for accurate translation. In Trichlorobacter lovleyi (strain ATCC BAA-1151 / DSM 17278 / SZ) (Geobacter lovleyi), this protein is Large ribosomal subunit protein bL12.